Reading from the N-terminus, the 212-residue chain is Acyl-homoserine-lactone synthase (212 aa).

This sequence belongs to the autoinducer synthase family.

It carries out the reaction a fatty acyl-[ACP] + S-adenosyl-L-methionine = an N-acyl-L-homoserine lactone + S-methyl-5'-thioadenosine + holo-[ACP] + H(+). Required for the synthesis of autoinducer molecules which bind to RaiR and that are involved in the restriction of nodule number. In Rhizobium etli, this protein is Acyl-homoserine-lactone synthase (raiI).